The primary structure comprises 308 residues: Mycothiol acetyltransferase (308 aa).

2 N-acetyltransferase domains span residues 12 to 149 (DVLD…RPLG) and 165 to 308 (VTVR…RTET). Residue E43 coordinates 1D-myo-inositol 2-(L-cysteinylamino)-2-deoxy-alpha-D-glucopyranoside. Residue 88–90 (LVV) participates in acetyl-CoA binding. Positions 192, 231, and 240 each coordinate 1D-myo-inositol 2-(L-cysteinylamino)-2-deoxy-alpha-D-glucopyranoside. Acetyl-CoA contacts are provided by residues 244-246 (VGV) and 251-257 (QGGGLGR). Residue Y278 coordinates 1D-myo-inositol 2-(L-cysteinylamino)-2-deoxy-alpha-D-glucopyranoside.

The protein belongs to the acetyltransferase family. MshD subfamily. Monomer.

It carries out the reaction 1D-myo-inositol 2-(L-cysteinylamino)-2-deoxy-alpha-D-glucopyranoside + acetyl-CoA = mycothiol + CoA + H(+). Its function is as follows. Catalyzes the transfer of acetyl from acetyl-CoA to desacetylmycothiol (Cys-GlcN-Ins) to form mycothiol. This is Mycothiol acetyltransferase from Streptomyces bingchenggensis (strain BCW-1).